Reading from the N-terminus, the 527-residue chain is Serine/threonine-protein kinase NLK (527 aa).

2 sufficient for interaction with DAPK3 regions span residues 1–125 (MSLC…KAHH) and 124–416 (HHHQ…SKRI). Required for interaction with TAB2 stretches follow at residues 1–304 (MSLC…VVTQ) and 434–527 (YHTC…LVWE). Disordered stretches follow at residues 22–72 (AAAA…SSAA) and 90–140 (QQPY…DIEP). The segment covering 26–54 (GHHHHHHHHLPHLPPPHLHHHHHPQHHLH) has biased composition (basic residues). The span at 103-119 (PGPAAAAPAQVQAAAAA) shows a compositional bias: low complexity. Over residues 122–131 (KAHHHQHSHH) the composition is skewed to basic residues. A Protein kinase domain is found at 138 to 427 (IEPDRPIGYG…AKDALAHPYL (290 aa)). ATP-binding positions include 144–152 (IGYGAFGVV) and lysine 167. Catalysis depends on aspartate 264, which acts as the Proton acceptor. Threonine 298 bears the Phosphothreonine; by autocatalysis mark. Positions 298–300 (TQE) match the TQE motif. Residues 428-527 (DEGRLRYHTC…EMPPSPLVWE (100 aa)) form a required for homodimerization and kinase activation and localization to the nucleus region. Phosphoserine is present on serine 522.

The protein belongs to the protein kinase superfamily. CMGC Ser/Thr protein kinase family. MAP kinase subfamily. As to quaternary structure, homodimer. Homodimerization is required for intermolecular autophosphorylation, kinase activation and nuclear localization. May interact with components of cullin-RING-based SCF (SKP1-CUL1-F-box protein) E3 ubiquitin-protein ligase complexes. Interacts with LEF1, MEF2A, MYBL1 and MYBL2. Interacts with the upstream activating kinases HIPK2 and MAP3K7/TAK1. Interaction with MAP3K7/TAK1 seems to be indirect, and may be mediated by other proteins such as STAT3, TAB1 and TAB2. Interacts with and phosphorylates a number of transcription factors including FOXO1, FOXO3, FOXO4, MYB, NOTCH1 and TCF7L2/TCF4. Interacts with DAPK3/ZIPK, and this interaction may disrupt interaction with transcription factors such as TCF7L2/TCF4. Forms a transcriptional repressor complex with CHD7, PPARG and SETDB1. Interacts with RNF138/NARF. Interacts with ATF5; the interaction stabilizes ATF5 at the protein level in a kinase-independent manner. It depends on Mg(2+) as a cofactor. In terms of processing, phosphorylated on Thr-298. Intermolecular autophosphorylation on Thr-298 activates the enzyme.

It is found in the nucleus. The protein localises to the cytoplasm. The enzyme catalyses L-seryl-[protein] + ATP = O-phospho-L-seryl-[protein] + ADP + H(+). It carries out the reaction L-threonyl-[protein] + ATP = O-phospho-L-threonyl-[protein] + ADP + H(+). Activated by the non-canonical Wnt signaling pathway, in which WNT5A leads to activation of MAP3K7/TAK1 and HIPK2, which subsequently phosphorylates and activates this protein. Activated by dimerization and subsequent intermolecular autophosphorylation on Thr-298. Other cytokines such as IL6 may also activate this regulatory circuit. Functionally, serine/threonine-protein kinase that regulates a number of transcription factors with key roles in cell fate determination. Positive effector of the non-canonical Wnt signaling pathway, acting downstream of WNT5A, MAP3K7/TAK1 and HIPK2. Negative regulator of the canonical Wnt/beta-catenin signaling pathway. Binds to and phosphorylates TCF7L2/TCF4 and LEF1, promoting the dissociation of the TCF7L2/LEF1/beta-catenin complex from DNA, as well as the ubiquitination and subsequent proteolysis of LEF1. Together these effects inhibit the transcriptional activation of canonical Wnt/beta-catenin target genes. Negative regulator of the Notch signaling pathway. Binds to and phosphorylates NOTCH1, thereby preventing the formation of a transcriptionally active ternary complex of NOTCH1, RBPJ/RBPSUH and MAML1. Negative regulator of the MYB family of transcription factors. Phosphorylation of MYB leads to its subsequent proteolysis while phosphorylation of MYBL1 and MYBL2 inhibits their interaction with the coactivator CREBBP. Other transcription factors may also be inhibited by direct phosphorylation of CREBBP itself. Acts downstream of IL6 and MAP3K7/TAK1 to phosphorylate STAT3, which is in turn required for activation of NLK by MAP3K7/TAK1. Upon IL1B stimulus, cooperates with ATF5 to activate the transactivation activity of C/EBP subfamily members. Phosphorylates ATF5 but also stabilizes ATF5 protein levels in a kinase-independent manner. Acts as an inhibitor of the mTORC1 complex in response to osmotic stress by mediating phosphorylation of RPTOR, thereby preventing recruitment of the mTORC1 complex to lysosomes. The polypeptide is Serine/threonine-protein kinase NLK (NLK) (Canis lupus familiaris (Dog)).